We begin with the raw amino-acid sequence, 260 residues long: Carbonic anhydrase 2 (260 aa).

In terms of domain architecture, Alpha-carbonic anhydrase spans 3-259 (HHWGYDSHNG…LKSREVRASF (257 aa)). Residue His64 is the Proton donor/acceptor of the active site. His94, His96, and His119 together coordinate Zn(2+). 198 to 199 (TT) provides a ligand contact to substrate.

This sequence belongs to the alpha-carbonic anhydrase family. Zn(2+) serves as cofactor.

It is found in the cytoplasm. It localises to the cell membrane. The enzyme catalyses hydrogencarbonate + H(+) = CO2 + H2O. It carries out the reaction urea = cyanamide + H2O. Inhibited by acetazolamide. Functionally, catalyzes the reversible hydration of carbon dioxide. Can also hydrate cyanamide to urea. The polypeptide is Carbonic anhydrase 2 (CA2) (Gallus gallus (Chicken)).